A 142-amino-acid polypeptide reads, in one-letter code: Large ribosomal subunit protein uL13 (142 aa).

This sequence belongs to the universal ribosomal protein uL13 family. Part of the 50S ribosomal subunit.

Functionally, this protein is one of the early assembly proteins of the 50S ribosomal subunit, although it is not seen to bind rRNA by itself. It is important during the early stages of 50S assembly. The sequence is that of Large ribosomal subunit protein uL13 from Buchnera aphidicola subsp. Cinara cedri (strain Cc).